The following is a 339-amino-acid chain: Ectoine/5-hydroxyectoine-binding periplasmic protein UehA (339 aa).

The first 20 residues, 1–20 (MAQSITFTFGAVAAAGIALA), serve as a signal peptide directing secretion. Positions 36, 171, 211, 215, and 236 each coordinate L-ectoine. A disulfide bridge links cysteine 162 with cysteine 303.

The protein belongs to the bacterial solute-binding protein 7 family. As to quaternary structure, monomer. The complex comprises the extracytoplasmic solute receptor protein UehA, and the two transmembrane proteins UehB and UehC.

It is found in the periplasm. Functionally, part of the tripartite ATP-independent periplasmic (TRAP) transport system UehABC, which imports both ectoine and 5-hydroxyectoine as nutrients, and not as osmoprotectants. UehA binds both ectoine and 5-hydroxyectoine with high specificity and affinity. In Ruegeria pomeroyi (strain ATCC 700808 / DSM 15171 / DSS-3) (Silicibacter pomeroyi), this protein is Ectoine/5-hydroxyectoine-binding periplasmic protein UehA.